The chain runs to 238 residues: Cysteine-rich venom protein 1 (238 aa).

An N-terminal signal peptide occupies residues Met-1 to Gly-19. The 127-residue stretch at Val-38–Tyr-164 folds into the SCP domain. 8 disulfides stabilise this stretch: Cys-75–Cys-153, Cys-92–Cys-165, Cys-148–Cys-162, Cys-184–Cys-191, Cys-187–Cys-196, Cys-200–Cys-233, Cys-209–Cys-227, and Cys-218–Cys-231. The ShKT domain maps to Cys-200–Cys-233.

Belongs to the CRISP family. In terms of tissue distribution, expressed by the venom gland.

The protein localises to the secreted. In terms of biological role, blocks contraction of smooth muscle elicited by high potassium-induced depolarization, but does not block caffeine-stimulated contraction. May target voltage-gated calcium channels on smooth muscle. The polypeptide is Cysteine-rich venom protein 1 (Hydrophis hardwickii (Hardwick's spine-bellied seasnake)).